A 108-amino-acid polypeptide reads, in one-letter code: MWVTCHLLKREKDEMKKKWREWAKEVCQFGKRILCISITDAALVNLEVLEPKNFEPGTLDGAGLFGCWSANGLGIALAYEITNSRFEINSGYTVKVKCLKRFQGEARG.

This is an uncharacterized protein from Schizosaccharomyces pombe (strain 972 / ATCC 24843) (Fission yeast).